The sequence spans 189 residues: GMP synthase [glutamine-hydrolyzing] subunit A (189 aa).

The region spanning 1 to 189 is the Glutamine amidotransferase type-1 domain; it reads MIVILNNGGQ…CKKCGFGFEE (189 aa). C76 functions as the Nucleophile in the catalytic mechanism. Active-site residues include H163 and E165.

Heterodimer composed of a glutamine amidotransferase subunit (A) and a GMP-binding subunit (B).

It carries out the reaction XMP + L-glutamine + ATP + H2O = GMP + L-glutamate + AMP + diphosphate + 2 H(+). It participates in purine metabolism; GMP biosynthesis; GMP from XMP (L-Gln route): step 1/1. Functionally, catalyzes the synthesis of GMP from XMP. In Methanococcus maripaludis (strain DSM 14266 / JCM 13030 / NBRC 101832 / S2 / LL), this protein is GMP synthase [glutamine-hydrolyzing] subunit A.